A 480-amino-acid chain; its full sequence is tRNA-2-methylthio-N(6)-dimethylallyladenosine synthase (480 aa).

The region spanning 31–151 (RGLHVITWGC…LPEMVARAAR (121 aa)) is the MTTase N-terminal domain. 6 residues coordinate [4Fe-4S] cluster: cysteine 40, cysteine 76, cysteine 114, cysteine 192, cysteine 196, and cysteine 199. In terms of domain architecture, Radical SAM core spans 178–410 (SPGGITSFLT…QALLRTQQDA (233 aa)). The TRAM domain maps to 413–475 (DGTVGHVVPV…TNSLSGTLVQ (63 aa)).

The protein belongs to the methylthiotransferase family. MiaB subfamily. Monomer. It depends on [4Fe-4S] cluster as a cofactor.

Its subcellular location is the cytoplasm. It catalyses the reaction N(6)-dimethylallyladenosine(37) in tRNA + (sulfur carrier)-SH + AH2 + 2 S-adenosyl-L-methionine = 2-methylsulfanyl-N(6)-dimethylallyladenosine(37) in tRNA + (sulfur carrier)-H + 5'-deoxyadenosine + L-methionine + A + S-adenosyl-L-homocysteine + 2 H(+). In terms of biological role, catalyzes the methylthiolation of N6-(dimethylallyl)adenosine (i(6)A), leading to the formation of 2-methylthio-N6-(dimethylallyl)adenosine (ms(2)i(6)A) at position 37 in tRNAs that read codons beginning with uridine. This chain is tRNA-2-methylthio-N(6)-dimethylallyladenosine synthase, found in Gluconacetobacter diazotrophicus (strain ATCC 49037 / DSM 5601 / CCUG 37298 / CIP 103539 / LMG 7603 / PAl5).